We begin with the raw amino-acid sequence, 200 residues long: Ephrin-A2 (200 aa).

An N-terminal signal peptide occupies residues 1–22; that stretch reads MPRWEAAALLAAIVGVCVWSDD. Residues 28-161 form the Ephrin RBD domain; that stretch reads SDRYAVYWNR…KLKVYVRPTN (134 aa). N36 carries N-linked (GlcNAc...) asparagine glycosylation. 2 disulfides stabilise this stretch: C61/C101 and C89/C150. N-linked (GlcNAc...) asparagine glycosylation is found at N161 and N175. N175 is lipidated: GPI-anchor amidated asparagine. The propeptide at 176 to 200 is removed in mature form; the sequence is NSCCSLAVPRAVLVAAPVFWTLLGS.

This sequence belongs to the ephrin family. In terms of assembly, binds to the receptor tyrosine kinases EPHA3, EPHA4 and EPHA5. Interacts with EPHA8; activates EPHA8. Expressed in a gradient across the tectum being more strongly expressed at the posterior pole.

The protein localises to the cell membrane. Its function is as follows. Cell surface GPI-bound ligand for Eph receptors, a family of receptor tyrosine kinases which are crucial for migration, repulsion and adhesion during neuronal, vascular and epithelial development. Binds promiscuously Eph receptors residing on adjacent cells, leading to contact-dependent bidirectional signaling into neighboring cells. The signaling pathway downstream of the receptor is referred to as forward signaling while the signaling pathway downstream of the ephrin ligand is referred to as reverse signaling. With the EPHA2 receptor may play a role in bone remodeling through regulation of osteoclastogenesis and osteoblastogenesis. This chain is Ephrin-A2 (EFNA2), found in Gallus gallus (Chicken).